The following is a 263-amino-acid chain: MALQTPSFLLPAAVVVLMVLSSPGTEGRDSPRDFVYQFKGLCYYTNGTQRIRDVIRYIYNQEEYLRYDSDVGEYRALTELGRPSAEYFNKQYLEQTRAELDTVCRHNYEGSEVRTSLRRLEQPNVAISLSRTEALNHHNLLVCSVTDFYPAQIKVRWFRNGQEETAGVVSTQLIRNGDWTFQILVMLEMTPQRGEVYICHVDHPSLESPVTVEWRAQSESAQSKMLSGIGGFVLGVIFLGLGLFIRHKRQKGPRGPPPAGLLQ.

The first 27 residues, 1 to 27 (MALQTPSFLLPAAVVVLMVLSSPGTEG), serve as a signal peptide directing secretion. Residues 28 to 120 (RDSPRDFVYQ…SEVRTSLRRL (93 aa)) form a beta-1 region. Over 28–224 (RDSPRDFVYQ…RAQSESAQSK (197 aa)) the chain is Extracellular. Cystine bridges form between Cys42/Cys104 and Cys143/Cys199. A glycan (N-linked (GlcNAc...) asparagine) is linked at Asn46. Residues 121–214 (EQPNVAISLS…SLESPVTVEW (94 aa)) form a beta-2 region. An Ig-like C1-type domain is found at 123-211 (PNVAISLSRT…DHPSLESPVT (89 aa)). The segment at 215-224 (RAQSESAQSK) is connecting peptide. The helical transmembrane segment at 225–245 (MLSGIGGFVLGVIFLGLGLFI) threads the bilayer. The Cytoplasmic portion of the chain corresponds to 246-263 (RHKRQKGPRGPPPAGLLQ). Lys251 is covalently cross-linked (Glycyl lysine isopeptide (Lys-Gly) (interchain with G-Cter in ubiquitin)).

It belongs to the MHC class II family.

Its subcellular location is the membrane. Its function is as follows. Involved in the presentation of foreign antigens to the immune system. This is Rano class II histocompatibility antigen, B-1 beta chain (RT1-Bb) from Rattus norvegicus (Rat).